We begin with the raw amino-acid sequence, 309 residues long: Coproporphyrin III ferrochelatase (309 aa).

Residues Tyr12, Thr14, Arg29, 45-46, Ser53, and Tyr124 contribute to the Fe-coproporphyrin III site; that span reads RY. Residues His182 and Glu263 each coordinate Fe(2+).

This sequence belongs to the ferrochelatase family. Monomer.

It is found in the cytoplasm. It carries out the reaction Fe-coproporphyrin III + 2 H(+) = coproporphyrin III + Fe(2+). It participates in porphyrin-containing compound metabolism; protoheme biosynthesis. Involved in coproporphyrin-dependent heme b biosynthesis. Catalyzes the insertion of ferrous iron into coproporphyrin III to form Fe-coproporphyrin III. This Listeria monocytogenes serovar 1/2a (strain ATCC BAA-679 / EGD-e) protein is Coproporphyrin III ferrochelatase.